Reading from the N-terminus, the 132-residue chain is Histone H2A (132 aa).

A compositionally biased stretch (basic residues) spans 1–13; that stretch reads MSAKGKTGRKKAS. Positions 1 to 21 are disordered; the sequence is MSAKGKTGRKKASKGTSNSAK.

It belongs to the histone H2A family. In terms of assembly, the nucleosome is a histone octamer containing two molecules each of H2A, H2B, H3 and H4 assembled in one H3-H4 heterotetramer and two H2A-H2B heterodimers. The octamer wraps approximately 147 bp of DNA.

The protein resides in the nucleus. The protein localises to the chromosome. Core component of nucleosome. Nucleosomes wrap and compact DNA into chromatin, limiting DNA accessibility to the cellular machineries which require DNA as a template. Histones thereby play a central role in transcription regulation, DNA repair, DNA replication and chromosomal stability. DNA accessibility is regulated via a complex set of post-translational modifications of histones, also called histone code, and nucleosome remodeling. This chain is Histone H2A, found in Plasmodium falciparum.